Consider the following 1990-residue polypeptide: Protein TANC2 (1990 aa).

2 disordered regions span residues 1–85 (MFRN…SVDE) and 129–149 (SPCS…PCST). Phosphoserine is present on residues serine 169, serine 238, serine 294, and serine 400. Positions 396 to 442 (IASDSPHASPKHVDANRELPLTQPPSAHSSITSGSCPGTPEMRRRQE) are disordered. Residues 419–431 (PPSAHSSITSGSC) show a composition bias toward polar residues. ANK repeat units follow at residues 846 to 878 (EGLS…NINY), 884 to 913 (NNAP…NVDA), 917 to 946 (SGLT…KVDH), 950 to 979 (NGQC…TMAG), 990 to 1019 (AIQQ…KDEE), 1033 to 1062 (WGET…AVAQ), 1066 to 1095 (RGAV…DVNM), 1099 to 1128 (QGRT…SIAL), 1132 to 1161 (EGLT…ATDH), 1165 to 1194 (NGRT…MIEH), and 1198 to 1227 (SGMR…KIGP). TPR repeat units lie at residues 1244 to 1277 (LSKL…FPRE), 1291 to 1324 (VSLL…KPKS), and 1325 to 1358 (YEAY…CPNN). 3 disordered regions span residues 1372–1401 (CRQM…EPQH), 1430–1586 (EARP…KMAQ), and 1692–1718 (LTKE…PQIG). Phosphoserine occurs at positions 1442 and 1458. The span at 1469 to 1498 (RSSSSVGSPTRQTYQSTSPALSPTHQNSHY) shows a compositional bias: polar residues. Phosphoserine is present on residues serine 1530 and serine 1545. A compositionally biased stretch (polar residues) spans 1553 to 1572 (VYRSQSGSPVRYQQETSVSQ). 2 positions are modified to asymmetric dimethylarginine: arginine 1563 and arginine 1576. Serine 1579 is modified (phosphoserine). Serine 1722 bears the Phosphoserine mark. Positions 1783-1798 (SPSSNSISSTSNLTPT) are enriched in low complexity. Disordered stretches follow at residues 1783–1803 (SPSS…RPSS) and 1821–1843 (DELS…SRTT). Phosphoserine occurs at positions 1824 and 1827. A glycan (N-linked (GlcNAc...) asparagine) is linked at asparagine 1928. Residues 1968 to 1990 (SRDSRQGQTSPIKPKRPFVESNV) form a disordered region.

This sequence belongs to the TANC family. As to quaternary structure, interacts with KIF1A; the interaction decreases in presence of calcium.

The protein resides in the cell projection. Its subcellular location is the dendritic spine. Functionally, scaffolding protein in the dendritic spines which acts as immobile postsynaptic posts able to recruit KIF1A-driven dense core vesicles to dendritic spines. In Homo sapiens (Human), this protein is Protein TANC2 (TANC2).